The chain runs to 274 residues: Undecaprenyl-diphosphatase (274 aa).

8 helical membrane passes run 1-21, 48-68, 84-104, 108-128, 143-163, 187-207, 214-234, and 254-274; these read MDWF…FLPI, VVIQ…DFAG, LGVI…GDVI, LFRP…MWVI, IGLG…LWPG, FSFY…FIKS, IGLL…YLAI, and VIFG…NGGL.

Belongs to the UppP family.

The protein resides in the cell membrane. It carries out the reaction di-trans,octa-cis-undecaprenyl diphosphate + H2O = di-trans,octa-cis-undecaprenyl phosphate + phosphate + H(+). Catalyzes the dephosphorylation of undecaprenyl diphosphate (UPP). Confers resistance to bacitracin. This chain is Undecaprenyl-diphosphatase, found in Deinococcus geothermalis (strain DSM 11300 / CIP 105573 / AG-3a).